The chain runs to 316 residues: GPI-specific phospholipase A2-like PGAP3 (316 aa).

A signal peptide spans 1–19 (MFLAAAAFLLSAPASASQG). Topologically, residues 20-97 (DKEPVYRDCV…GKWPFARFLC (78 aa)) are lumenal. An N-linked (GlcNAc...) asparagine glycan is attached at N36. A helical membrane pass occupies residues 98–118 (FEEPASALASLLNGLACLLML). Topologically, residues 119–131 (LRYRSAVPCQSPM) are cytoplasmic. Residues 132–152 (YHTITAFSLVSLNAWFWSTVF) form a helical membrane-spanning segment. Topologically, residues 153-165 (HTRDTYLTEKMDY) are lumenal. Residues 166–186 (FCASAVILYSIYLCCVRTLGL) form a helical membrane-spanning segment. Topologically, residues 187 to 194 (RRPAISSM) are cytoplasmic. Residues 195 to 215 (VGVLLILAFTSHVSYLTFVSF) form a helical membrane-spanning segment. Residues 216-220 (DYGYN) are Lumenal-facing. A helical membrane pass occupies residues 221-241 (MAANASIGIINLLWWLCWCWL). At 242 to 254 (NRRILPYWWRCGM) the chain is on the cytoplasmic side. A helical membrane pass occupies residues 255 to 275 (VVLLLHGLALLELLDFPPLFW). At 276–278 (VLD) the chain is on the lumenal side. The chain crosses the membrane as a helical span at residues 279 to 299 (AHAVWHLSTVPVHFLFYSFLI). Over 300–316 (DDSLHLLNTEKPGVKLD) the chain is Cytoplasmic.

This sequence belongs to the PGAP3 family.

The protein resides in the golgi apparatus membrane. Its function is as follows. Involved in the fatty acid remodeling steps of GPI-anchor maturation where the unsaturated acyl chain at sn-2 of inositol phosphate is replaced by a saturated stearoyl chain. May catalyze the first step of the fatty acid remodeling, by removing the unsaturated acyl chain at sn-2 of inositol phosphate, generating a lyso-GPI intermediate. The fatty acid remodeling steps is critical for the integration of GPI-APs into lipid rafts. This is GPI-specific phospholipase A2-like PGAP3 from Danio rerio (Zebrafish).